A 176-amino-acid polypeptide reads, in one-letter code: NAD(P)H-quinone oxidoreductase subunit I, chloroplastic (176 aa).

2 4Fe-4S ferredoxin-type domains span residues 55–84 (GRIH…VDWE) and 95–124 (LNYS…MTEE). Cys-64, Cys-67, Cys-70, Cys-74, Cys-104, Cys-107, Cys-110, and Cys-114 together coordinate [4Fe-4S] cluster.

Belongs to the complex I 23 kDa subunit family. NDH is composed of at least 16 different subunits, 5 of which are encoded in the nucleus. [4Fe-4S] cluster is required as a cofactor.

It localises to the plastid. The protein localises to the chloroplast thylakoid membrane. It catalyses the reaction a plastoquinone + NADH + (n+1) H(+)(in) = a plastoquinol + NAD(+) + n H(+)(out). The catalysed reaction is a plastoquinone + NADPH + (n+1) H(+)(in) = a plastoquinol + NADP(+) + n H(+)(out). NDH shuttles electrons from NAD(P)H:plastoquinone, via FMN and iron-sulfur (Fe-S) centers, to quinones in the photosynthetic chain and possibly in a chloroplast respiratory chain. The immediate electron acceptor for the enzyme in this species is believed to be plastoquinone. Couples the redox reaction to proton translocation, and thus conserves the redox energy in a proton gradient. The sequence is that of NAD(P)H-quinone oxidoreductase subunit I, chloroplastic from Populus trichocarpa (Western balsam poplar).